The following is a 256-amino-acid chain: Homeobox-leucine zipper protein HOX18 (256 aa).

Residues 52-116 form a disordered region; that stretch reads YDHGRDEEQA…GGGGGGTRKK (65 aa). The segment covering 102–112 has biased composition (gly residues); that stretch reads DGGSGGGGGGG. Residues 112 to 171 constitute a DNA-binding region (homeobox); that stretch reads GTRKKLQLTKEQSTLLEDSFRVHNILSHAQKHELARQLKLKPRQVEVWFQNRRARTKLKQ. The tract at residues 170–214 is leucine-zipper; it reads KQTEVDCEFLKRCCESLTEENKQLKHELMELRRLASPAAAAAGSQ.

The protein belongs to the HD-ZIP homeobox family. Class II subfamily. In terms of tissue distribution, expressed in roots, leaf sheaths and blades and panicles.

The protein localises to the nucleus. Probable transcription factor. The polypeptide is Homeobox-leucine zipper protein HOX18 (HOX18) (Oryza sativa subsp. japonica (Rice)).